A 300-amino-acid polypeptide reads, in one-letter code: Acetylglutamate kinase (300 aa).

Substrate-binding positions include 68-69 (GG), Arg90, and Asn194.

Belongs to the acetylglutamate kinase family. ArgB subfamily.

It is found in the cytoplasm. It carries out the reaction N-acetyl-L-glutamate + ATP = N-acetyl-L-glutamyl 5-phosphate + ADP. It functions in the pathway amino-acid biosynthesis; L-arginine biosynthesis; N(2)-acetyl-L-ornithine from L-glutamate: step 2/4. Its function is as follows. Catalyzes the ATP-dependent phosphorylation of N-acetyl-L-glutamate. In Methanocella arvoryzae (strain DSM 22066 / NBRC 105507 / MRE50), this protein is Acetylglutamate kinase.